A 768-amino-acid polypeptide reads, in one-letter code: Solabiose phosphorylase (768 aa).

Aspartate 456 acts as the Proton donor in catalysis.

The protein belongs to the glycosyl hydrolase 94 family.

The enzyme catalyses solabiose + phosphate = D-galactose + alpha-D-glucose 1-phosphate. In terms of biological role, catalyzes the reversible phosphorolysis of solabiose. Catalyzes the phosphorolysis and synthesis of solabiose through a sequential bi-bi mechanism involving the formation of a ternary complex. Is probably involved in the metabolism of solabiose released from solabiose-containing compounds. The sequence is that of Solabiose phosphorylase from Paenibacillus borealis.